A 149-amino-acid polypeptide reads, in one-letter code: 3-dehydroquinate dehydratase (149 aa).

Catalysis depends on Tyr22, which acts as the Proton acceptor. Positions 74, 80, and 87 each coordinate substrate. His100 serves as the catalytic Proton donor. Substrate is bound by residues 101–102 (MS) and Arg111.

This sequence belongs to the type-II 3-dehydroquinase family. In terms of assembly, homododecamer.

The catalysed reaction is 3-dehydroquinate = 3-dehydroshikimate + H2O. It participates in metabolic intermediate biosynthesis; chorismate biosynthesis; chorismate from D-erythrose 4-phosphate and phosphoenolpyruvate: step 3/7. Its function is as follows. Catalyzes a trans-dehydration via an enolate intermediate. The sequence is that of 3-dehydroquinate dehydratase from Leptothrix cholodnii (strain ATCC 51168 / LMG 8142 / SP-6) (Leptothrix discophora (strain SP-6)).